The chain runs to 236 residues: 2,3,4,5-tetrahydropyridine-2,6-dicarboxylate N-acetyltransferase (236 aa).

It belongs to the transferase hexapeptide repeat family. DapH subfamily.

The catalysed reaction is (S)-2,3,4,5-tetrahydrodipicolinate + acetyl-CoA + H2O = L-2-acetamido-6-oxoheptanedioate + CoA. It functions in the pathway amino-acid biosynthesis; L-lysine biosynthesis via DAP pathway; LL-2,6-diaminopimelate from (S)-tetrahydrodipicolinate (acetylase route): step 1/3. Its function is as follows. Catalyzes the transfer of an acetyl group from acetyl-CoA to tetrahydrodipicolinate. This chain is 2,3,4,5-tetrahydropyridine-2,6-dicarboxylate N-acetyltransferase, found in Clostridium botulinum (strain Loch Maree / Type A3).